Here is a 323-residue protein sequence, read N- to C-terminus: Dolichyl-phosphate beta-glucosyltransferase ALG5A (323 aa).

Over 1 to 5 the chain is Lumenal; it reads MKFWR. Residues 6–26 traverse the membrane as a helical segment; that stretch reads FVQILFFLGVAAVGLVVAVMI. Residues 27-323 are Cytoplasmic-facing; that stretch reads ANADDTTLFD…GAWKIRDRRH (297 aa).

This sequence belongs to the glycosyltransferase 2 family.

The protein localises to the endoplasmic reticulum membrane. The enzyme catalyses a di-trans,poly-cis-dolichyl phosphate + UDP-alpha-D-glucose = a di-trans,poly-cis-dolichyl beta-D-glucosyl phosphate + UDP. It functions in the pathway protein modification; protein glycosylation. In terms of biological role, dolichyl-phosphate beta-glucosyltransferase involved in the glycosylation of glycoproteins through the synthesis of dolichyl beta-D-glucosyl phosphate which serves as a sugar donor for transfer of three glucose residues to the Man-9-GlcNAc-2-PP-dolichol precursor to N-glycans. The protein is Dolichyl-phosphate beta-glucosyltransferase ALG5A of Trichomonas vaginalis (strain ATCC PRA-98 / G3).